The sequence spans 242 residues: Ribonuclease PH (242 aa).

Phosphate is bound by residues Arg86 and 124–126; that span reads GTR.

Belongs to the RNase PH family. In terms of assembly, homohexameric ring arranged as a trimer of dimers.

The enzyme catalyses tRNA(n+1) + phosphate = tRNA(n) + a ribonucleoside 5'-diphosphate. Its function is as follows. Phosphorolytic 3'-5' exoribonuclease that plays an important role in tRNA 3'-end maturation. Removes nucleotide residues following the 3'-CCA terminus of tRNAs; can also add nucleotides to the ends of RNA molecules by using nucleoside diphosphates as substrates, but this may not be physiologically important. Probably plays a role in initiation of 16S rRNA degradation (leading to ribosome degradation) during starvation. This chain is Ribonuclease PH, found in Bacillus pumilus (strain SAFR-032).